We begin with the raw amino-acid sequence, 88 residues long: Small ribosomal subunit protein bS18 (88 aa).

It belongs to the bacterial ribosomal protein bS18 family. Part of the 30S ribosomal subunit. Forms a tight heterodimer with protein bS6.

Functionally, binds as a heterodimer with protein bS6 to the central domain of the 16S rRNA, where it helps stabilize the platform of the 30S subunit. This is Small ribosomal subunit protein bS18 from Aliarcobacter butzleri (strain RM4018) (Arcobacter butzleri).